Consider the following 315-residue polypeptide: Aspartate carbamoyltransferase catalytic subunit (315 aa).

Carbamoyl phosphate-binding residues include arginine 65 and threonine 66. Lysine 93 contributes to the L-aspartate binding site. Residues arginine 115, histidine 145, and glutamine 148 each coordinate carbamoyl phosphate. The L-aspartate site is built by arginine 179 and arginine 234. 2 residues coordinate carbamoyl phosphate: glycine 275 and proline 276.

Belongs to the aspartate/ornithine carbamoyltransferase superfamily. ATCase family. In terms of assembly, heterododecamer (2C3:3R2) of six catalytic PyrB chains organized as two trimers (C3), and six regulatory PyrI chains organized as three dimers (R2).

It catalyses the reaction carbamoyl phosphate + L-aspartate = N-carbamoyl-L-aspartate + phosphate + H(+). It participates in pyrimidine metabolism; UMP biosynthesis via de novo pathway; (S)-dihydroorotate from bicarbonate: step 2/3. Its function is as follows. Catalyzes the condensation of carbamoyl phosphate and aspartate to form carbamoyl aspartate and inorganic phosphate, the committed step in the de novo pyrimidine nucleotide biosynthesis pathway. In Xanthomonas oryzae pv. oryzae (strain MAFF 311018), this protein is Aspartate carbamoyltransferase catalytic subunit.